The primary structure comprises 453 residues: Na(+)/H(+) antiporter NhaA 2 (453 aa).

A run of 12 helical transmembrane segments spans residues 23 to 43 (FLHIEAVSGIVLLIAAVAALI), 74 to 94 (LHFWINDGLMTIFFLVVGMEI), 111 to 131 (LPMAAAVGGVAVPALLYLSFG), 139 to 159 (GWAVPTATDIAFAVGVLALLG), 168 to 188 (VFLLALAIIDDIIAVLIIAFF), 191 to 211 (GGLDYTGFGVAVIGLLMVIGL), 214 to 234 (IGVGSAYAYVIPGAIVWLGIL), 235 to 255 (LTGAHPTLAGVVLGLMTPVTA), 316 to 336 (VAFGIMPVFALANAGVSLSGV), 345 to 365 (WVMIAVAVALVAGKPLGIVSV), 386 to 406 (IMLVGLLAGIGFTMSIFIANL), and 419 to 439 (LGVLSASLIAAVLGLTWGVWS).

This sequence belongs to the NhaA Na(+)/H(+) (TC 2.A.33) antiporter family.

Its subcellular location is the cell inner membrane. It carries out the reaction Na(+)(in) + 2 H(+)(out) = Na(+)(out) + 2 H(+)(in). Its function is as follows. Na(+)/H(+) antiporter that extrudes sodium in exchange for external protons. The protein is Na(+)/H(+) antiporter NhaA 2 of Pseudomonas putida (strain ATCC 47054 / DSM 6125 / CFBP 8728 / NCIMB 11950 / KT2440).